Consider the following 398-residue polypeptide: Succinate--CoA ligase [ADP-forming] subunit beta (398 aa).

Residues 9–253 enclose the ATP-grasp domain; the sequence is MALLNERGVS…AGASDPLEQE (245 aa). ATP contacts are provided by residues Lys46, 53 to 55, Val111, and Glu116; that span reads GRG. 2 residues coordinate Mg(2+): Asn208 and Asp222. Substrate is bound by residues Asn273 and 330–332; that span reads GIM.

Belongs to the succinate/malate CoA ligase beta subunit family. In terms of assembly, heterotetramer of two alpha and two beta subunits. Requires Mg(2+) as cofactor.

The catalysed reaction is succinate + ATP + CoA = succinyl-CoA + ADP + phosphate. It carries out the reaction GTP + succinate + CoA = succinyl-CoA + GDP + phosphate. It participates in carbohydrate metabolism; tricarboxylic acid cycle; succinate from succinyl-CoA (ligase route): step 1/1. Its function is as follows. Succinyl-CoA synthetase functions in the citric acid cycle (TCA), coupling the hydrolysis of succinyl-CoA to the synthesis of either ATP or GTP and thus represents the only step of substrate-level phosphorylation in the TCA. The beta subunit provides nucleotide specificity of the enzyme and binds the substrate succinate, while the binding sites for coenzyme A and phosphate are found in the alpha subunit. This chain is Succinate--CoA ligase [ADP-forming] subunit beta, found in Zymomonas mobilis subsp. mobilis (strain ATCC 31821 / ZM4 / CP4).